The following is a 193-amino-acid chain: MIKAILIFNNHGKPRLSKFYQPYSEDTQQQIIRETFHLVSKRDENVCNFLEGGLLIGGSDNKLIYRHYATLYFVFCVDSSESELGILDLIQVFVETLDKCFENVCELDLIFHVDKVHNILAEMVMGGMVLETNMNEIVTQIDAQNKLEKSEAGLAGAPARAVSAVKNMNLPEIPRNINIGDISIKVPNLPSFK.

Residue Ser191 is modified to Phosphoserine.

This sequence belongs to the adaptor complexes small subunit family. Adaptor protein complex 3 (AP-3) is a heterotetramer composed of two large adaptins (delta-type subunit AP3D1 and beta-type subunit AP3B1 or AP3B2), a medium adaptin (mu-type subunit AP3M1 or AP3M2) and a small adaptin (sigma-type subunit APS1 or AP3S2). Interacts with AGAP1. AP-3 associates with the BLOC-1 complex.

It localises to the golgi apparatus. The protein localises to the cytoplasmic vesicle membrane. Functionally, part of the AP-3 complex, an adaptor-related complex which is not clathrin-associated. The complex is associated with the Golgi region as well as more peripheral structures. It facilitates the budding of vesicles from the Golgi membrane and may be directly involved in trafficking to lysosomes. In concert with the BLOC-1 complex, AP-3 is required to target cargos into vesicles assembled at cell bodies for delivery into neurites and nerve terminals. In Bos taurus (Bovine), this protein is AP-3 complex subunit sigma-1 (AP3S1).